The chain runs to 382 residues: Proton extrusion protein PxcA (382 aa).

4 helical membrane passes run 156-176 (TLIS…VQQI), 257-277 (AIKN…VCII), 305-325 (IILF…QVLL), and 340-360 (FILL…KYWI).

It belongs to the CemA family.

It is found in the cell inner membrane. Its function is as follows. Required for H(+) efflux immediately after light irradiation to form a rapid H(+) concentration gradient across the thylakoid membranes. Together with PxcL, contributes to transient H(+) uptake following dark to light transition. This is Proton extrusion protein PxcA from Prochlorococcus marinus (strain MIT 9313).